Consider the following 335-residue polypeptide: N-acetyl-gamma-glutamyl-phosphate reductase (335 aa).

The active site involves C155.

It belongs to the NAGSA dehydrogenase family. Type 1 subfamily.

The protein resides in the cytoplasm. It catalyses the reaction N-acetyl-L-glutamate 5-semialdehyde + phosphate + NADP(+) = N-acetyl-L-glutamyl 5-phosphate + NADPH + H(+). It participates in amino-acid biosynthesis; L-arginine biosynthesis; N(2)-acetyl-L-ornithine from L-glutamate: step 3/4. Functionally, catalyzes the NADPH-dependent reduction of N-acetyl-5-glutamyl phosphate to yield N-acetyl-L-glutamate 5-semialdehyde. The sequence is that of N-acetyl-gamma-glutamyl-phosphate reductase from Pasteurella multocida (strain Pm70).